The sequence spans 150 residues: Lymphotoxin-beta (150 aa).

Residues 1-149 enclose the THD domain; the sequence is AWITGQGLGW…GKTFFGAVMV (149 aa). N-linked (GlcNAc...) asparagine glycosylation is present at asparagine 128.

It belongs to the tumor necrosis factor family. In terms of assembly, heterotrimer of either two LTB and one LTA subunits or (less prevalent) two LTA and one LTB subunits.

Its subcellular location is the membrane. In terms of biological role, cytokine that binds to LTBR/TNFRSF3. May play a specific role in immune response regulation. Provides the membrane anchor for the attachment of the heterotrimeric complex to the cell surface. The sequence is that of Lymphotoxin-beta (LTB) from Sus scrofa (Pig).